A 612-amino-acid polypeptide reads, in one-letter code: MYKKNISNIFLLPNDILKRIYICNKKKKLIPHSFLINLFQKQIGYPKSFANLNWAFSKIIKWYYDRGYQWSLVEVKQASDASSIVIDIHEGVVKTIITEYYTLSYKRVSGILCVESIEQYLGVRVGAPLNIIDLQKKITYLKDNQLVGDIIYSIERSNNSSMSLDIKFQIQELKDKEIIVLAESSSIISHACNLLNQYRNRLVASNIVSLSTNKLHACYFNYKLDYQYKYINTSNLIKLLAYSISCRKTLLIHYFNLQTLISCTKKNTIGFQLYLRNLSFGKAFCVLSMKFIKNGLNIKILYINPSLIVDQNFVFQFAIQIIKQYHTAKPPALFLTNLDLEQYVAESLLMYHFTSCFSISEKILLSRIMHTDSLFFNSENFHFDDRTNAINSYDTFKQNTKIFYQEFLSLLLSLRYQNFTYLGWPLKGHFFEIKSLYLAPFQKSDFSDSRKTLFFHKMSLKQVSNFNLPVSFKSHLNHILVSTIKCQSNLNMRTVSLLLIDSPAEYLLYKSILNFSIKVRMQYFIPMSNNIRLSLFYNYLDCFLIRSSQSCIHIWQDLRTLTPIQNFWLKKFSYGAGIQLKLPIKQMPPLSIEYTVTSSRYFCIYLRTYYQR.

It localises to the plastid. It is found in the chloroplast. This is an uncharacterized protein from Pyropia yezoensis (Susabi-nori).